A 338-amino-acid chain; its full sequence is Acyl-CoA Delta(11) desaturase (338 aa).

2 helical membrane-spanning segments follow: residues 33–53 (IVYF…YGLY) and 61–81 (WATV…VTAG). The Histidine box-1 signature appears at 83–88 (HRLWSH). A helical transmembrane segment spans residues 97–117 (LQILLMVMNSLAFQNTVIDWV). Positions 120-124 (HRLHH) match the Histidine box-2 motif. Transmembrane regions (helical) follow at residues 181-201 (AIPF…VYGW) and 212-234 (AMLR…HIYG). Positions 260-264 (HNYHH) match the Histidine box-3 motif. Positions 318–338 (TNLWGLEDVDTPEDLKNTKGE) are disordered.

It belongs to the fatty acid desaturase type 1 family. Requires Fe cation as cofactor. In terms of tissue distribution, detected in the pheromone gland.

Its subcellular location is the membrane. The catalysed reaction is an 11,12-saturated fatty acyl-CoA + 2 Fe(II)-[cytochrome b5] + O2 + 2 H(+) = an (11Z)-Delta(11)-fatty acyl-CoA + 2 Fe(III)-[cytochrome b5] + 2 H2O. Its function is as follows. Catalyzes the formation of delta(11) fatty acyl precursors in the pheromone gland, and has high activity towards palmitic acid and stearic acid. The sequence is that of Acyl-CoA Delta(11) desaturase from Spodoptera littoralis (Egyptian cotton leafworm).